A 155-amino-acid polypeptide reads, in one-letter code: MKAVISTVSQASVDVRDDSGEVRRVGEVSGPALLALIGSGRDDDADAWETMVRKIAELRLFPASGEPWGGQRDLSVEEVGGSVLVVSQFTLMGKTKRGRRPSWSEAMPGPAAEPVIEKIVHGLRNRGIHVETGEFGADMQVSSVNEGPYTVLVEC.

A Gly-cisPro motif, important for rejection of L-amino acids motif is present at residues 147–148 (GP).

It belongs to the DTD family. In terms of assembly, homodimer.

It localises to the cytoplasm. The enzyme catalyses glycyl-tRNA(Ala) + H2O = tRNA(Ala) + glycine + H(+). It catalyses the reaction a D-aminoacyl-tRNA + H2O = a tRNA + a D-alpha-amino acid + H(+). In terms of biological role, an aminoacyl-tRNA editing enzyme that deacylates mischarged D-aminoacyl-tRNAs. Also deacylates mischarged glycyl-tRNA(Ala), protecting cells against glycine mischarging by AlaRS. Acts via tRNA-based rather than protein-based catalysis; rejects L-amino acids rather than detecting D-amino acids in the active site. By recycling D-aminoacyl-tRNA to D-amino acids and free tRNA molecules, this enzyme counteracts the toxicity associated with the formation of D-aminoacyl-tRNA entities in vivo and helps enforce protein L-homochirality. The polypeptide is D-aminoacyl-tRNA deacylase (Corynebacterium urealyticum (strain ATCC 43042 / DSM 7109)).